Here is a 360-residue protein sequence, read N- to C-terminus: Glyceraldehyde-3-phosphate dehydrogenase (360 aa).

NAD(+) contacts are provided by residues 13–14, D35, and R82; that span reads RI. Residues 153–155, T184, 213–214, and R236 contribute to the D-glyceraldehyde 3-phosphate site; these read SCT and TG. The Nucleophile role is filled by C154. Residue N318 participates in NAD(+) binding.

The protein belongs to the glyceraldehyde-3-phosphate dehydrogenase family. Homotetramer.

It carries out the reaction D-glyceraldehyde 3-phosphate + phosphate + NAD(+) = (2R)-3-phospho-glyceroyl phosphate + NADH + H(+). It functions in the pathway carbohydrate degradation; glycolysis; pyruvate from D-glyceraldehyde 3-phosphate: step 1/5. Key enzyme in glycolysis that catalyzes the first step of the pathway by converting D-glyceraldehyde 3-phosphate (G3P) into 3-phospho-D-glyceroyl phosphate. Essential for the maintenance of cellular ATP levels and carbohydrate metabolism. This chain is Glyceraldehyde-3-phosphate dehydrogenase, found in Atriplex nummularia (Old man saltbush).